The chain runs to 75 residues: Dermaseptin-SP5 (75 aa).

An N-terminal signal peptide occupies residues 1 to 22 (MAFLKKSLFLVLFLGLVSLSMC). A propeptide spanning residues 23 to 45 (EEEKRENEVEEEQEDDEQSELRR) is cleaved from the precursor. A disordered region spans residues 26-46 (KRENEVEEEQEDDEQSELRRS). Residues 30–40 (EVEEEQEDDEQ) show a composition bias toward acidic residues. Pro-72 is subject to Proline amide. A propeptide spanning residues 74 to 75 (EQ) is cleaved from the precursor.

This sequence belongs to the frog skin active peptide (FSAP) family. Dermaseptin subfamily. In terms of tissue distribution, expressed by the skin glands.

It is found in the secreted. Its subcellular location is the target cell membrane. Antimicrobial peptide with weak activity against Gram-positive and Gram-negative bacteria and fungi. Has been tested against E.coli (MIC=96.06-256 uM), S.aureus (MIC&gt;192.12 uM), K.pneumoniae (MIC&gt;189.00 uM) and C.albicans (MIC=384.24-1024 uM). Probably acts by disturbing membrane functions with its alpha-helical amphipathic structure. May penetrate bacterial membranes, but stay at the mammalian membrane surface. Does not show hemolytic activity. Does not interact at all with cardiolipin. In Agalychnis spurrelli (Gliding leaf frog), this protein is Dermaseptin-SP5.